Here is a 454-residue protein sequence, read N- to C-terminus: Bifunctional protein GlmU (454 aa).

Residues 1–228 (MSLKVIILAA…EMEVLGVNNK (228 aa)) form a pyrophosphorylase region. UDP-N-acetyl-alpha-D-glucosamine-binding positions include 8 to 11 (LAAG), Lys-22, Gln-73, 78 to 79 (GT), 100 to 102 (YGD), Gly-138, Glu-153, Asn-168, and Asn-226. Position 102 (Asp-102) interacts with Mg(2+). Residue Asn-226 coordinates Mg(2+). The linker stretch occupies residues 229–249 (SQLQSLERQYQAQLAEELMEQ). The N-acetyltransferase stretch occupies residues 250–454 (GVTVLDASRI…IKGWQKPTKN (205 aa)). UDP-N-acetyl-alpha-D-glucosamine contacts are provided by Arg-332 and Lys-350. His-362 (proton acceptor) is an active-site residue. The UDP-N-acetyl-alpha-D-glucosamine site is built by Tyr-365 and Asn-376. Residues Ala-379, 385 to 386 (NY), Ser-404, Ala-422, and Arg-439 contribute to the acetyl-CoA site.

The protein in the N-terminal section; belongs to the N-acetylglucosamine-1-phosphate uridyltransferase family. In the C-terminal section; belongs to the transferase hexapeptide repeat family. In terms of assembly, homotrimer. The cofactor is Mg(2+).

Its subcellular location is the cytoplasm. It catalyses the reaction alpha-D-glucosamine 1-phosphate + acetyl-CoA = N-acetyl-alpha-D-glucosamine 1-phosphate + CoA + H(+). It carries out the reaction N-acetyl-alpha-D-glucosamine 1-phosphate + UTP + H(+) = UDP-N-acetyl-alpha-D-glucosamine + diphosphate. It functions in the pathway nucleotide-sugar biosynthesis; UDP-N-acetyl-alpha-D-glucosamine biosynthesis; N-acetyl-alpha-D-glucosamine 1-phosphate from alpha-D-glucosamine 6-phosphate (route II): step 2/2. It participates in nucleotide-sugar biosynthesis; UDP-N-acetyl-alpha-D-glucosamine biosynthesis; UDP-N-acetyl-alpha-D-glucosamine from N-acetyl-alpha-D-glucosamine 1-phosphate: step 1/1. Its pathway is bacterial outer membrane biogenesis; LPS lipid A biosynthesis. In terms of biological role, catalyzes the last two sequential reactions in the de novo biosynthetic pathway for UDP-N-acetylglucosamine (UDP-GlcNAc). The C-terminal domain catalyzes the transfer of acetyl group from acetyl coenzyme A to glucosamine-1-phosphate (GlcN-1-P) to produce N-acetylglucosamine-1-phosphate (GlcNAc-1-P), which is converted into UDP-GlcNAc by the transfer of uridine 5-monophosphate (from uridine 5-triphosphate), a reaction catalyzed by the N-terminal domain. The protein is Bifunctional protein GlmU of Hydrogenovibrio crunogenus (strain DSM 25203 / XCL-2) (Thiomicrospira crunogena).